We begin with the raw amino-acid sequence, 152 residues long: Probable histone H2A.3 (152 aa).

Disordered regions lie at residues 1–25 (MDASTKTTKKGAGGRKGGGPRKKSV) and 129–152 (KTERANTGGKEPKTTKAGKSPKKA). Over residues 7–25 (TTKKGAGGRKGGGPRKKSV) the composition is skewed to basic residues. Positions 129 to 142 (KTERANTGGKEPKT) are enriched in basic and acidic residues. Residues 148-151 (SPKK) carry the SPKK motif motif.

This sequence belongs to the histone H2A family. As to quaternary structure, the nucleosome is a histone octamer containing two molecules each of H2A, H2B, H3 and H4 assembled in one H3-H4 heterotetramer and two H2A-H2B heterodimers. The octamer wraps approximately 147 bp of DNA.

It localises to the nucleus. Its subcellular location is the chromosome. Functionally, core component of nucleosome. Nucleosomes wrap and compact DNA into chromatin, limiting DNA accessibility to the cellular machineries which require DNA as a template. Histones thereby play a central role in transcription regulation, DNA repair, DNA replication and chromosomal stability. DNA accessibility is regulated via a complex set of post-translational modifications of histones, also called histone code, and nucleosome remodeling. The polypeptide is Probable histone H2A.3 (Medicago truncatula (Barrel medic)).